We begin with the raw amino-acid sequence, 97 residues long: SAGA-associated factor 11 (97 aa).

Residues 70 to 91 (IECNVCGREVSGNRFAAHLVRC) form an SGF11-type zinc finger.

It belongs to the SGF11 family. As to quaternary structure, component of the 1.8 MDa SAGA transcription coactivator-HAT complex. SAGA is built of 5 distinct domains with specialized functions. Within the SAGA complex, SUS1, SGF11, SGF73 and UBP8 form an additional subcomplex of SAGA called the DUB module (deubiquitination module). Interacts directly with SGF73, SUS1 and UBP8.

Its subcellular location is the nucleus. Functionally, functions as a component of the transcription regulatory histone acetylation (HAT) complex SAGA. At the promoters, SAGA is required for recruitment of the basal transcription machinery. It influences RNA polymerase II transcriptional activity through different activities such as TBP interaction and promoter selectivity, interaction with transcription activators, and chromatin modification through histone acetylation and deubiquitination. SAGA acetylates nucleosomal histone H3 to some extent (to form H3K9ac, H3K14ac, H3K18ac and H3K23ac). SAGA interacts with DNA via upstream activating sequences (UASs). Involved in transcriptional regulation of a subset of SAGA-regulated genes. Within the SAGA complex, participates in a subcomplex, that specifically deubiquitinates histones H2B. This Kluyveromyces lactis (strain ATCC 8585 / CBS 2359 / DSM 70799 / NBRC 1267 / NRRL Y-1140 / WM37) (Yeast) protein is SAGA-associated factor 11.